The sequence spans 176 residues: Large ribosomal subunit protein eL6A (176 aa).

Ser-2 bears the N-acetylserine mark. Ser-12 is modified (phosphoserine). Lys-128 is covalently cross-linked (Glycyl lysine isopeptide (Lys-Gly) (interchain with G-Cter in ubiquitin)).

The protein belongs to the eukaryotic ribosomal protein eL6 family. Component of the large ribosomal subunit (LSU). Mature yeast ribosomes consist of a small (40S) and a large (60S) subunit. The 40S small subunit contains 1 molecule of ribosomal RNA (18S rRNA) and 33 different proteins (encoded by 57 genes). The large 60S subunit contains 3 rRNA molecules (25S, 5.8S and 5S rRNA) and 46 different proteins (encoded by 81 genes). N-terminally acetylated by acetyltransferase NatA.

Its subcellular location is the cytoplasm. In terms of biological role, component of the ribosome, a large ribonucleoprotein complex responsible for the synthesis of proteins in the cell. The small ribosomal subunit (SSU) binds messenger RNAs (mRNAs) and translates the encoded message by selecting cognate aminoacyl-transfer RNA (tRNA) molecules. The large subunit (LSU) contains the ribosomal catalytic site termed the peptidyl transferase center (PTC), which catalyzes the formation of peptide bonds, thereby polymerizing the amino acids delivered by tRNAs into a polypeptide chain. The nascent polypeptides leave the ribosome through a tunnel in the LSU and interact with protein factors that function in enzymatic processing, targeting, and the membrane insertion of nascent chains at the exit of the ribosomal tunnel. The sequence is that of Large ribosomal subunit protein eL6A from Saccharomyces cerevisiae (strain ATCC 204508 / S288c) (Baker's yeast).